The sequence spans 151 residues: MKCPYCAYGESKVVDSRSTEDGSSIRRRRECLKCNRRYTTYEKIETTPILVIKKNMSREYFDRNKMVNGLMKACQKRPVSRKQIEQIADEVERHISNEMLTEVNTDKIGQIIMKNLKKIDEVSYVRFASVYRQFKDINTFMEEIKNLMDKN.

A zinc finger lies at 3 to 34 (CPYCAYGESKVVDSRSTEDGSSIRRRRECLKC). Residues 49–139 (ILVIKKNMSR…VYRQFKDINT (91 aa)) form the ATP-cone domain.

It belongs to the NrdR family. Requires Zn(2+) as cofactor.

Functionally, negatively regulates transcription of bacterial ribonucleotide reductase nrd genes and operons by binding to NrdR-boxes. This is Transcriptional repressor NrdR from Clostridium botulinum (strain 657 / Type Ba4).